A 434-amino-acid chain; its full sequence is Nuclear receptor subfamily 1 group I member 2 (434 aa).

The segment at residues 38-107 (PQICRVCGDK…RLRKCLESGM (70 aa)) is a DNA-binding region (nuclear receptor). 2 consecutive NR C4-type zinc fingers follow at residues 41 to 61 (CRVC…CEGC) and 77 to 102 (CPFR…LRKC). The short motif at 66-92 (RRAMKRNARLRCPFRKGACEITRKTRR) is the Bipartite nuclear localization signal element. The segment at 108-145 (KKEMIMSDEAVEERRALIKRKKSERTGTQPLGVQGLTE) is hinge. The region spanning 146–433 (EQRMMIRELM…LMQELFGITG (288 aa)) is the NR LBD domain. Hyperforin-binding positions include Ser-247, 285 to 288 (QLRF), and His-407.

This sequence belongs to the nuclear hormone receptor family. NR1 subfamily. Heterodimer with RXR. Interacts with NCOA1. Interacts (via domain NR LBD) with CRY1 and CRY2 in a ligand-dependent manner. Expressed in liver, colon and small intestine.

It is found in the nucleus. In terms of biological role, nuclear receptor that binds and is activated by variety of endogenous and xenobiotic compounds. Transcription factor that activates the transcription of multiple genes involved in the metabolism and secretion of potentially harmful xenobiotics, drugs and endogenous compounds. Activated by the antibiotic rifampicin and various plant metabolites, such as hyperforin, guggulipid, colupulone, and isoflavones. Response to specific ligands is species-specific. Activated by naturally occurring steroids, such as pregnenolone and progesterone. Binds to a response element in the promoters of the CYP3A4 and ABCB1/MDR1 genes. This is Nuclear receptor subfamily 1 group I member 2 (NR1I2) from Homo sapiens (Human).